The chain runs to 95 residues: Ferredoxin-like protein FixX (95 aa).

The protein belongs to the bacterial-type ferredoxin family. FixX subfamily.

Its function is as follows. Could be part of an electron transfer system required for anaerobic carnitine reduction. Could be a 3Fe-4S cluster-containing protein. This chain is Ferredoxin-like protein FixX (fixX), found in Escherichia coli O157:H7.